The following is a 63-amino-acid chain: Cecropin-C (63 aa).

The N-terminal stretch at 1–23 (MNFNKIFVFVALILAISLGQSEA) is a signal peptide. Residue R62 is modified to Arginine amide.

Belongs to the cecropin family.

It localises to the secreted. In terms of biological role, cecropins have lytic and antibacterial activity against several Gram-positive and Gram-negative bacteria. This Drosophila orena (Fruit fly) protein is Cecropin-C (CecC).